Reading from the N-terminus, the 122-residue chain is UPF0102 protein Rleg2_4331 (122 aa).

It belongs to the UPF0102 family.

In Rhizobium leguminosarum bv. trifolii (strain WSM2304), this protein is UPF0102 protein Rleg2_4331.